Here is a 49-residue protein sequence, read N- to C-terminus: Large ribosomal subunit protein bL33A (49 aa).

This sequence belongs to the bacterial ribosomal protein bL33 family.

The protein is Large ribosomal subunit protein bL33A of Bacillus cytotoxicus (strain DSM 22905 / CIP 110041 / 391-98 / NVH 391-98).